The chain runs to 27 residues: Snake venom serine protease Afaacytin alpha/beta/beta' chains (27 aa).

Positions 1 to 27 (VIGGAECNINEHRSLVLLYXSSSXFGE) constitute a Peptidase S1 domain.

The protein belongs to the peptidase S1 family. Snake venom subfamily. As to quaternary structure, heterodimer of an alpha and a beta chain. Subunit beta is constituted of two disulfide-linked polypeptidic chains, beta and beta'. Calcium appears to be required for structural cohesion of the molecule. Both chains alpha and beta are N-glycosylated. In terms of tissue distribution, expressed by the venom gland.

It is found in the secreted. With respect to regulation, inhibited by diisopropylfluorophosphate (DFP), benzamidine, heparin and hirudin, but not by plasmatic thrombin inhibitors, antithrombin-III and ecotin. In terms of biological role, snake venom serine protease that exhibits alpha-fibrinase and beta-fibrinogenase activities. It replaces missing factors VIII (F8) and IX (F9) in deficient plasmas by activating purified human factor X (F10) into factor Xa. It releases serotonin from platelets and induces platelet aggregation in human (but not in rabbit). Has caseinolytic, arginine-esterase and amidase activities. The protein is Snake venom serine protease Afaacytin alpha/beta/beta' chains of Cerastes cerastes (Horned desert viper).